The chain runs to 1353 residues: Protein timeless homolog (1353 aa).

Disordered regions lie at residues 798-825 (VAED…EEEV), 1150-1291 (KPTR…LEED), and 1306-1335 (GGSI…DPFT). Over residues 802–825 (RAEDPDEEDPAEPYDSEQEEEEEV) the composition is skewed to acidic residues. 2 stretches are compositionally biased toward basic and acidic residues: residues 1150–1160 (KPTRQVERHLE) and 1168–1182 (ERSK…KFDD). Acidic residues-rich tracts occupy residues 1183 to 1206 (FLND…EEEE) and 1217 to 1226 (DSEDEEEHIE). Residues 1227–1239 (QEEAQKKLEKVAE) show a composition bias toward basic and acidic residues. Acidic residues-rich tracts occupy residues 1261 to 1273 (DSSD…DSAE), 1282 to 1291 (AEDDSDLEED), and 1323 to 1332 (EEREDDDDED).

This sequence belongs to the timeless family. As to quaternary structure, associates with the cohesin complex. Interacts with smc-1, smc-3, scc-1 and scc-3.

It is found in the nucleus. In terms of biological role, plays an important role in chromosome cohesion during both mitosis and meiosis. In prophase of meiosis, it is involved in the formation of the synaptonemal complex (SC) and specifically, in the diplotene and diakinesis phases of prophase, it stabilizes the association of homologous chromosomes during synapsis and sister chromatid cohesion. It regulates cohesin subunits to promote meiotic chromosome cohesion and localizes non-SMC (structural maintenance of chromosome) cohesin subunits to chromatin prior to or during pre-meiotic S phase. Implicated in influencing either the stability or loading of meiotic-specific cohesin subunit, rec8. Controls cell cycle exit and cell fusion to prevent the premature differentiation into adult cells. Specifically, regulates hypodermal seam cell identity. The sequence is that of Protein timeless homolog from Caenorhabditis elegans.